The primary structure comprises 97 residues: YcgL domain-containing protein PFL_1496 (97 aa).

The 85-residue stretch at 3-87 (RICSIYKSPR…AEDEYIEHLP (85 aa)) folds into the YcgL domain.

The sequence is that of YcgL domain-containing protein PFL_1496 from Pseudomonas fluorescens (strain ATCC BAA-477 / NRRL B-23932 / Pf-5).